Consider the following 660-residue polypeptide: Bifunctional polymyxin resistance protein ArnA (660 aa).

The interval Met1–Val304 is formyltransferase ArnAFT. The Proton donor; for formyltransferase activity role is filled by His104. Residues Arg114 and Val136 to Asp140 each bind (6R)-10-formyltetrahydrofolate. A dehydrogenase ArnADH region spans residues His314–Asn660. Residues Asp347 and Asp368–Ile369 contribute to the NAD(+) site. UDP-alpha-D-glucuronate-binding positions include Ala393, Tyr398, and Thr432 to Ser433. Catalysis depends on Glu434, which acts as the Proton acceptor; for decarboxylase activity. UDP-alpha-D-glucuronate contacts are provided by residues Arg460, Asn492, Lys526–Arg535, and Tyr613. Catalysis depends on Arg619, which acts as the Proton donor; for decarboxylase activity.

It in the N-terminal section; belongs to the Fmt family. UDP-L-Ara4N formyltransferase subfamily. In the C-terminal section; belongs to the NAD(P)-dependent epimerase/dehydratase family. UDP-glucuronic acid decarboxylase subfamily. As to quaternary structure, homohexamer, formed by a dimer of trimers.

It catalyses the reaction UDP-alpha-D-glucuronate + NAD(+) = UDP-beta-L-threo-pentopyranos-4-ulose + CO2 + NADH. It carries out the reaction UDP-4-amino-4-deoxy-beta-L-arabinose + (6R)-10-formyltetrahydrofolate = UDP-4-deoxy-4-formamido-beta-L-arabinose + (6S)-5,6,7,8-tetrahydrofolate + H(+). It participates in nucleotide-sugar biosynthesis; UDP-4-deoxy-4-formamido-beta-L-arabinose biosynthesis; UDP-4-deoxy-4-formamido-beta-L-arabinose from UDP-alpha-D-glucuronate: step 1/3. It functions in the pathway nucleotide-sugar biosynthesis; UDP-4-deoxy-4-formamido-beta-L-arabinose biosynthesis; UDP-4-deoxy-4-formamido-beta-L-arabinose from UDP-alpha-D-glucuronate: step 3/3. The protein operates within bacterial outer membrane biogenesis; lipopolysaccharide biosynthesis. Bifunctional enzyme that catalyzes the oxidative decarboxylation of UDP-glucuronic acid (UDP-GlcUA) to UDP-4-keto-arabinose (UDP-Ara4O) and the addition of a formyl group to UDP-4-amino-4-deoxy-L-arabinose (UDP-L-Ara4N) to form UDP-L-4-formamido-arabinose (UDP-L-Ara4FN). The modified arabinose is attached to lipid A and is required for resistance to polymyxin and cationic antimicrobial peptides. The protein is Bifunctional polymyxin resistance protein ArnA of Photorhabdus laumondii subsp. laumondii (strain DSM 15139 / CIP 105565 / TT01) (Photorhabdus luminescens subsp. laumondii).